The following is a 206-amino-acid chain: Dephospho-CoA kinase (206 aa).

The DPCK domain maps to 4–200 (IVALTGGIGS…AYYLQLASQF (197 aa)). An ATP-binding site is contributed by 12–17 (GSGKST).

Belongs to the CoaE family.

The protein localises to the cytoplasm. The catalysed reaction is 3'-dephospho-CoA + ATP = ADP + CoA + H(+). It functions in the pathway cofactor biosynthesis; coenzyme A biosynthesis; CoA from (R)-pantothenate: step 5/5. Its function is as follows. Catalyzes the phosphorylation of the 3'-hydroxyl group of dephosphocoenzyme A to form coenzyme A. The protein is Dephospho-CoA kinase of Escherichia coli O6:H1 (strain CFT073 / ATCC 700928 / UPEC).